The following is a 632-amino-acid chain: MHGLLLAAGLLSLPLRVLAHPQPSTSLTSQGVDLNAYRMADRSSYMSSDEMKLEQPSISSLSGGNYVETATEVVKRMMPGVTFRMVDDHYVGESGISHVYFRQTMHGMDIDNSDFNVNIGKDGKVLSFGNSFYTNPTPDKAPVEKRDFSDPMKALHGARKALNLPINADKATIKSMNEHEVMFMGTSGALSDPQGKLCYMAKEDGTLALTWRVETDMGDNWLLSYVDAKDTDKVHNVVDYVSHATYQVYPWPVPDPTEGKRAVLQNPWNLKASPFTWISDGKNNYSTTRGNNAIAQANFDGGSDYLNNYRPNNKNLKFEYPYAPNMSPPKSYIDASVTQLFYSANMVHDLYYMLGFTEKAGNFQVNNRNQGGKGGDFVILNAQDGSGTNNANFATPPDGQPGRMRVYIWTKAKPARDSSFEAGTVIHEYTHGLSNRLCGGPANSACLNGMESGGMGEGWGDFFATAIRLKPNDNRNANYVHGEWVNNSPRGNRMFPYSTSLQTNPLVYTSCNKYNEVHAIGTVWCSILYEVLWNLIDKHGKNDGPTPVFENGVPKDGKYLAMKLVLDGMAIQPCKPTFVQARNAILDADMNLTKGANKCELWKAFAKRGLGTGAKYDPKNRTGSKAVPKECQ.

The signal sequence occupies residues 1 to 19; it reads MHGLLLAAGLLSLPLRVLA. Residues 20-243 constitute a propeptide that is removed on maturation; sequence HPQPSTSLTS…VHNVVDYVSH (224 aa). N-linked (GlcNAc...) asparagine glycosylation is present at asparagine 284. A Zn(2+)-binding site is contributed by histidine 427. Glutamate 428 is a catalytic residue. A Zn(2+)-binding site is contributed by histidine 431. Asparagine 591 and asparagine 620 each carry an N-linked (GlcNAc...) asparagine glycan.

The protein belongs to the peptidase M36 family. It depends on Zn(2+) as a cofactor.

The protein localises to the secreted. Secreted metalloproteinase that allows assimilation of proteinaceous substrates and probably acts as a virulence factor. The protein is Extracellular metalloproteinase 1 (MEP1) of Arthroderma gypseum (strain ATCC MYA-4604 / CBS 118893) (Microsporum gypseum).